A 100-amino-acid polypeptide reads, in one-letter code: Urease subunit gamma (100 aa).

The protein belongs to the urease gamma subunit family. Heterotrimer of UreA (gamma), UreB (beta) and UreC (alpha) subunits. Three heterotrimers associate to form the active enzyme.

The protein localises to the cytoplasm. The enzyme catalyses urea + 2 H2O + H(+) = hydrogencarbonate + 2 NH4(+). It participates in nitrogen metabolism; urea degradation; CO(2) and NH(3) from urea (urease route): step 1/1. The polypeptide is Urease subunit gamma (Kocuria rhizophila (strain ATCC 9341 / DSM 348 / NBRC 103217 / DC2201)).